A 750-amino-acid chain; its full sequence is MLRAKNQLFLLSPHYLKQVKESSGSRLIQQRLLHQQQPLHPEWAALAKKQLKGKNPEDLIWHTPEGISIKPLYSKRDTMDLPEELPGVKPFTRGPYPTMYTFRPWTIRQYAGFSTVEESNKFYKDNIKAGQQGLSVAFDLATHRGYDSDNPRVRGDVGMAGVAIDTVEDTKILFDGIPLEKMSVSMTMNGAVIPVLANFIVTGEEQGVPKEKLTGTIQNDILKEFMVRNTYIFPPEPSMKIIADIFEYTAKHMPKFNSISISGYHMQEAGADAILELAYTLADGLEYSRTGLQAGLTIDEFAPRLSFFWGIGMNFYMEITKMRAGRRLWAHLIEKMFQPKNSKSLLLRAHCQTSGWSLTEQDPYNNIVRTAIEAMAAVFGGTQSLHTNSFDEALGLPTVKSARIARNTQIIIQEESGIPKVADPWGGSYMMECLTNDVYDAALKLINEIEEMGGMAKAVAEGIPKLRIEECAARRQARIDSGSEVIVGVNKYQLEKEDAVEVLAIDNTSVRNRQIEKLKKIKSSRDQALAERCLAALTECAASGDGNILALAVDASRARCTVGEITDALKKVFGEHKANDRMVSGAYRQEFGESKEITSAIKRVHKFMEREGRRPRLLVAKMGQDGHDRGAKVIATGFADLGFDVDIGPLFQTPREVAQQAVDADVHAVGVSTLAAGHKTLVPELIKELNSLGRPDILVMCGGVIPPQDYEFLFEVGVSNVFGPGTRIPKAAVQVLDDIEKCLEKKQQSV.

The N-terminal 32 residues, 1–32 (MLRAKNQLFLLSPHYLKQVKESSGSRLIQQRL), are a transit peptide targeting the mitochondrion. Glutamine 50 provides a ligand contact to malonyl-CoA. N6-acetyllysine is present on lysine 89. Malonyl-CoA-binding positions include 96 to 99 (YPTM) and 106 to 110 (TIRQY). Lysine 212 is subject to N6-acetyllysine. Malonyl-CoA-binding positions include 216 to 218 (TIQ), arginine 228, lysine 255, histidine 265, and 304 to 306 (RLS). An N6-acetyllysine modification is found at lysine 335. The residue at position 343 (lysine 343) is an N6-succinyllysine. A Phosphoserine modification is found at serine 481. At lysine 595 the chain carries N6-succinyllysine. Position 602 is an N6-acetyllysine (lysine 602). Residues 614 to 746 (RPRLLVAKMG…DDIEKCLEKK (133 aa)) form the B12-binding domain. Residue histidine 627 participates in adenosylcob(III)alamin binding.

This sequence belongs to the methylmalonyl-CoA mutase family. As to quaternary structure, homodimer. Interacts (the apoenzyme form) with MMAA; the interaction is GTP dependent. Adenosylcob(III)alamin is required as a cofactor.

It is found in the mitochondrion matrix. Its subcellular location is the mitochondrion. It localises to the cytoplasm. The catalysed reaction is (R)-methylmalonyl-CoA = succinyl-CoA. With respect to regulation, inhibited by itaconyl-CoA, a metabolite that inactivates the coenzyme B12 cofactor. In terms of biological role, catalyzes the reversible isomerization of methylmalonyl-CoA (MMCoA) (generated from branched-chain amino acid metabolism and degradation of dietary odd chain fatty acids and cholesterol) to succinyl-CoA (3-carboxypropionyl-CoA), a key intermediate of the tricarboxylic acid cycle. This is Methylmalonyl-CoA mutase, mitochondrial (MMUT) from Pongo abelii (Sumatran orangutan).